The following is a 214-amino-acid chain: GTP-binding nuclear protein GSP1/Ran (214 aa).

Residues 4 to 168 enclose the Small GTPase Ran-type domain; that stretch reads EVPTFKLVLV…LWLARKLAGN (165 aa). GTP is bound at residue 15 to 22; it reads DGGTGKTT. The interval 34–42 is switch-I; the sequence is KKYIATIGV. GTP-binding positions include G65, 119 to 122, and 147 to 149; these read NKVD and SAK. Residues 65–81 are switch-II; the sequence is GQEKFGGLRDGYYINAQ.

The protein belongs to the small GTPase superfamily. Ran family. Found in a nuclear export complex with RanGTP, exportin and pre-miRNA.

The protein localises to the nucleus. Its function is as follows. GTP-binding protein involved in nucleocytoplasmic transport. Required for the import of protein into the nucleus and also for RNA export. Involved in chromatin condensation and control of cell cycle. The polypeptide is GTP-binding nuclear protein GSP1/Ran (GSP1) (Candida glabrata (strain ATCC 2001 / BCRC 20586 / JCM 3761 / NBRC 0622 / NRRL Y-65 / CBS 138) (Yeast)).